A 232-amino-acid polypeptide reads, in one-letter code: Lipoarabinomannan carrier protein LprG (232 aa).

The first 21 residues, 1 to 21, serve as a signal peptide directing secretion; it reads MQTRLTAILAAFLTAVALLAG. C22 is lipidated: N-palmitoyl cysteine. A lipid anchor (S-diacylglycerol cysteine) is attached at C22.

Belongs to the LppX/LprAFG lipoprotein family. Post-translationally, modified by Lgt on Cys-22 with an S-linked diacylglyceral, signal peptide is removed by LspA, Cys-22 is further modifed with a fatty acid on its amino group by Lnt yielding a triacylated protein.

It is found in the cell inner membrane. In terms of biological role, helps membrane protein MHAS_02168/C731_2106 (P55) transport triacylglycerides (TAG) across the inner cell membrane into the periplasm and probably ultimately to the outer membrane. Binds TAG in its hydrophobic cavity and transfers it between lipid bilayers. TAG probably regulates lipid metabolism and growth regulation and plays a structural role in the outer membrane. Also binds mannosides, lipoarabinomannan and lipomannan and various glycolipids in the same cavity. The lprG-MHAS_02167/C731_2107 operon complements the vancomycin sensitivity of an M.smegmatis knockout of the same operon. The sequence is that of Lipoarabinomannan carrier protein LprG from Mycolicibacterium hassiacum (strain DSM 44199 / CIP 105218 / JCM 12690 / 3849) (Mycobacterium hassiacum).